We begin with the raw amino-acid sequence, 470 residues long: 6-phospho-beta-glucosidase BglB (470 aa).

The active-site Proton donor is the Glu172. Catalysis depends on Glu361, which acts as the Nucleophile.

The protein belongs to the glycosyl hydrolase 1 family.

The catalysed reaction is 6-phospho-beta-D-glucosyl-(1-&gt;4)-D-glucose + H2O = D-glucose 6-phosphate + D-glucose. Its function is as follows. Catalyzes the hydrolysis of phosphorylated beta-glucosides into glucose-6-phosphate (G-6-P) and aglycone. It has a high affinity for phosphorylated aromatic beta-glucosides (p-nitrophenyl-beta-glucoside, phenyl beta-glucoside, arbutin and phosphorylated salicin), and a low affinity for phosphorylated beta-methyl-glucoside. This chain is 6-phospho-beta-glucosidase BglB (bglB), found in Escherichia coli (strain K12).